Consider the following 343-residue polypeptide: F17c-G fimbrial adhesin (343 aa).

Residues 1-22 (MTNFYKVFLAVFILVCCNISHA) form the signal peptide. The receptor-binding lectin domain stretch occupies residues 23 to 199 (AVSFIGSTEN…LNPFTLNDTV (177 aa)). Residues 65–66 (AN), 110–111 (DT), and 138–141 (STQG) each bind a carbohydrate. Cys75 and Cys132 are joined by a disulfide. The fimbrillin-binding domain stretch occupies residues 200 to 343 (TSCRLLTPSA…GISTFTFSYQ (144 aa)). Positions 287-307 (LKFGPDSPVKGNENQWQLSTG) are disordered. Positions 298–307 (NENQWQLSTG) are enriched in polar residues.

The protein belongs to the fimbrial protein family.

The protein localises to the fimbrium. In terms of biological role, essential fimbrial adhesion factor that mediates binding to N-acetylglucosamine-containing receptors in the host intestinal microvilli, leading to colonization of the intestinal tissue, and diarrhea or septicemia. Also confers adhesiveness to laminin and basement membranes. The polypeptide is F17c-G fimbrial adhesin (f17cG) (Escherichia coli).